The following is a 365-amino-acid chain: Anhydro-N-acetylmuramic acid kinase (365 aa).

9–16 provides a ligand contact to ATP; that stretch reads GTSLDGVD.

The protein belongs to the anhydro-N-acetylmuramic acid kinase family.

It carries out the reaction 1,6-anhydro-N-acetyl-beta-muramate + ATP + H2O = N-acetyl-D-muramate 6-phosphate + ADP + H(+). It functions in the pathway amino-sugar metabolism; 1,6-anhydro-N-acetylmuramate degradation. It participates in cell wall biogenesis; peptidoglycan recycling. Catalyzes the specific phosphorylation of 1,6-anhydro-N-acetylmuramic acid (anhMurNAc) with the simultaneous cleavage of the 1,6-anhydro ring, generating MurNAc-6-P. Is required for the utilization of anhMurNAc either imported from the medium or derived from its own cell wall murein, and thus plays a role in cell wall recycling. The polypeptide is Anhydro-N-acetylmuramic acid kinase (Rhodopseudomonas palustris (strain BisB18)).